A 625-amino-acid polypeptide reads, in one-letter code: Probable thymidylate synthase (625 aa).

The disordered stretch occupies residues 224–323; the sequence is AVKNIDGQDD…PEPPVPFTSS (100 aa). Residues 243–257 are compositionally biased toward acidic residues; that stretch reads EEYDDDDDDDVDDNE. 2 stretches are compositionally biased toward polar residues: residues 258 to 269 and 293 to 312; these read QSNSMIETSANA and SQAPLGSESVDTQASENVTT. Residues R350 and 477-478 contribute to the dUMP site; that span reads RR. C497 (nucleophile) is an active-site residue. DUMP contacts are provided by residues 524 to 527, N535, and 565 to 567; these read RSAD and HIY. D527 lines the (6R)-5,10-methylene-5,6,7,8-tetrahydrofolate pocket.

This sequence in the N-terminal section; belongs to the HFCD (homo-oligomeric flavin containing Cys decarboxylase) superfamily. It in the C-terminal section; belongs to the thymidylate synthase family.

Its subcellular location is the cytoplasm. The enzyme catalyses dUMP + (6R)-5,10-methylene-5,6,7,8-tetrahydrofolate = 7,8-dihydrofolate + dTMP. The protein operates within pyrimidine metabolism; dTTP biosynthesis. Required for both nuclear and mitochondrial DNA synthesis. The sequence is that of Probable thymidylate synthase from Schizosaccharomyces pombe (strain 972 / ATCC 24843) (Fission yeast).